A 195-amino-acid polypeptide reads, in one-letter code: FMN-dependent NADH:quinone oxidoreductase (195 aa).

Residues serine 10, 16-18 (SVS), and 88-91 (MYNF) each bind FMN.

Belongs to the azoreductase type 1 family. In terms of assembly, homodimer. It depends on FMN as a cofactor.

The enzyme catalyses 2 a quinone + NADH + H(+) = 2 a 1,4-benzosemiquinone + NAD(+). The catalysed reaction is N,N-dimethyl-1,4-phenylenediamine + anthranilate + 2 NAD(+) = 2-(4-dimethylaminophenyl)diazenylbenzoate + 2 NADH + 2 H(+). In terms of biological role, quinone reductase that provides resistance to thiol-specific stress caused by electrophilic quinones. Also exhibits azoreductase activity. Catalyzes the reductive cleavage of the azo bond in aromatic azo compounds to the corresponding amines. This chain is FMN-dependent NADH:quinone oxidoreductase, found in Francisella philomiragia subsp. philomiragia (strain ATCC 25017 / CCUG 19701 / FSC 153 / O#319-036).